The primary structure comprises 467 residues: Ribulose bisphosphate carboxylase large chain (467 aa).

Lys6 is modified (N6,N6,N6-trimethyllysine). Positions 115 and 165 each coordinate substrate. Lys167 functions as the Proton acceptor in the catalytic mechanism. Residue Lys169 participates in substrate binding. Mg(2+)-binding residues include Lys193, Asp195, and Glu196. Lys193 bears the N6-carboxylysine mark. The active-site Proton acceptor is the His286. Substrate contacts are provided by Arg287, His319, and Ser371.

Belongs to the RuBisCO large chain family. Type I subfamily. In terms of assembly, heterohexadecamer of 8 large chains and 8 small chains; disulfide-linked. The disulfide link is formed within the large subunit homodimers. Mg(2+) is required as a cofactor. In terms of processing, the disulfide bond which can form in the large chain dimeric partners within the hexadecamer appears to be associated with oxidative stress and protein turnover.

The protein resides in the plastid. Its subcellular location is the chloroplast. The enzyme catalyses 2 (2R)-3-phosphoglycerate + 2 H(+) = D-ribulose 1,5-bisphosphate + CO2 + H2O. It catalyses the reaction D-ribulose 1,5-bisphosphate + O2 = 2-phosphoglycolate + (2R)-3-phosphoglycerate + 2 H(+). Functionally, ruBisCO catalyzes two reactions: the carboxylation of D-ribulose 1,5-bisphosphate, the primary event in carbon dioxide fixation, as well as the oxidative fragmentation of the pentose substrate in the photorespiration process. Both reactions occur simultaneously and in competition at the same active site. The chain is Ribulose bisphosphate carboxylase large chain from Cedrus atlantica (Atlas cedar).